The chain runs to 428 residues: Trigger factor (428 aa).

The PPIase FKBP-type domain occupies K163–P248.

It belongs to the FKBP-type PPIase family. Tig subfamily.

It is found in the cytoplasm. It carries out the reaction [protein]-peptidylproline (omega=180) = [protein]-peptidylproline (omega=0). In terms of biological role, involved in protein export. Acts as a chaperone by maintaining the newly synthesized protein in an open conformation. Functions as a peptidyl-prolyl cis-trans isomerase. In Lachnoclostridium phytofermentans (strain ATCC 700394 / DSM 18823 / ISDg) (Clostridium phytofermentans), this protein is Trigger factor.